The following is a 365-amino-acid chain: Flagellin 1 (365 aa).

This sequence belongs to the bacterial flagellin family.

The protein resides in the secreted. The protein localises to the bacterial flagellum. Functionally, flagellin is the subunit protein which polymerizes to form the filaments of bacterial flagella. This Proteus mirabilis protein is Flagellin 1 (fliC1).